The following is a 453-amino-acid chain: Ribosomal protein uS12 methylthiotransferase RimO (453 aa).

The MTTase N-terminal domain maps to 9–124 (PKVGFVSLGC…VMEAVHTHLP (116 aa)). [4Fe-4S] cluster is bound by residues cysteine 18, cysteine 54, cysteine 83, cysteine 155, cysteine 159, and cysteine 162. A Radical SAM core domain is found at 141–382 (LTPKHYAYLK…MEVAERVSAR (242 aa)). In terms of domain architecture, TRAM spans 385–453 (QRKVGKSLRV…ADGHDLWGEV (69 aa)).

This sequence belongs to the methylthiotransferase family. RimO subfamily. [4Fe-4S] cluster serves as cofactor.

Its subcellular location is the cytoplasm. The enzyme catalyses L-aspartate(89)-[ribosomal protein uS12]-hydrogen + (sulfur carrier)-SH + AH2 + 2 S-adenosyl-L-methionine = 3-methylsulfanyl-L-aspartate(89)-[ribosomal protein uS12]-hydrogen + (sulfur carrier)-H + 5'-deoxyadenosine + L-methionine + A + S-adenosyl-L-homocysteine + 2 H(+). Functionally, catalyzes the methylthiolation of an aspartic acid residue of ribosomal protein uS12. In Ralstonia pickettii (strain 12J), this protein is Ribosomal protein uS12 methylthiotransferase RimO.